We begin with the raw amino-acid sequence, 215 residues long: Sodium channel regulatory subunit beta-3 (215 aa).

Positions 1–22 are cleaved as a signal peptide; sequence MPAFNRLFPLASLVLIYWVSVC. Over 23-156 the chain is Extracellular; the sequence is FPVCVEVPSE…EEAGEDFTSV (134 aa). 2 disulfide bridges follow: Cys26–Cys48 and Cys45–Cys120. The Ig-like C2-type domain maps to 32 to 154; sequence ETEAVQGNPM…VTEEAGEDFT (123 aa). 4 N-linked (GlcNAc...) asparagine glycosylation sites follow: Asn95, Asn109, Asn113, and Asn121. Residues 157 to 178 form a helical membrane-spanning segment; that stretch reads VSEIMMYILLVFLTLWLLIEMI. Over 179–215 the chain is Cytoplasmic; sequence YCYRKVSKAEEAAQENASDYLAIPSENKENSAVPVEE.

Belongs to the sodium channel auxiliary subunit SCN3B (TC 8.A.17) family. In terms of assembly, a voltage-gated sodium (Nav) channel consists of an ion-conducting pore-forming alpha subunit functional on its own that is regulated by one or more beta subunits. Forms homodimers and homotrimers. SCN3B is non-covalently associated with alpha subunits and induces the formation of alpha subunit oligomers, including trimers. Interacts with SCN5A/Nav1.5; regulatory subunit of SCN5A/Nav1.5. Interacts with SCN7A/Nav2.1; probable regulatory subunit of SCN7A/Nav2.1. Interacts with SCN10A; regulatory subunit of SCN10A/Nav1.8. Interacts with NFASC; probably involved in targeting the sodium channels to the nodes of Ranvier. Intramolecular disulfide bonds favor the voltage-gated sodium channel oligomeric complex assembly. In terms of processing, N-glycosylated. In terms of tissue distribution, expressed in the atrium.

It localises to the cell membrane. Regulatory subunit of multiple voltage-gated sodium (Nav) channels directly mediating the depolarization of excitable membranes. Navs, also called VGSCs (voltage-gated sodium channels) or VDSCs (voltage-dependent sodium channels), operate by switching between closed and open conformations depending on the voltage difference across the membrane. In the open conformation they allow Na(+) ions to selectively pass through the pore, along their electrochemical gradient. The influx of Na+ ions provokes membrane depolarization, initiating the propagation of electrical signals throughout cells and tissues. The accessory beta subunits participate in localization and functional modulation of the Nav channels. Modulates the activity of SCN2A/Nav1.2, causing a hyperpolarizing shift in the voltage-dependence of inactivation of the channel and increasing the fraction of channels operating in the fast gating mode. Modulates the activity of SCN5A/Nav1.5. Could also regulate the atypical sodium channel SCN7A/Nav2.1. Modulates the activity of SCN10A/Nav1.8, regulating its oligomerization and accelerating the recovery from inactivation. This is Sodium channel regulatory subunit beta-3 from Homo sapiens (Human).